A 301-amino-acid polypeptide reads, in one-letter code: Lipoyl synthase (301 aa).

The [4Fe-4S] cluster site is built by C53, C58, C64, C79, C83, C86, and S290. One can recognise a Radical SAM core domain in the interval 65 to 279; the sequence is WSRKTATYML…RIYGKSIGFK (215 aa).

The protein belongs to the radical SAM superfamily. Lipoyl synthase family. [4Fe-4S] cluster serves as cofactor.

The protein localises to the cytoplasm. It catalyses the reaction [[Fe-S] cluster scaffold protein carrying a second [4Fe-4S](2+) cluster] + N(6)-octanoyl-L-lysyl-[protein] + 2 oxidized [2Fe-2S]-[ferredoxin] + 2 S-adenosyl-L-methionine + 4 H(+) = [[Fe-S] cluster scaffold protein] + N(6)-[(R)-dihydrolipoyl]-L-lysyl-[protein] + 4 Fe(3+) + 2 hydrogen sulfide + 2 5'-deoxyadenosine + 2 L-methionine + 2 reduced [2Fe-2S]-[ferredoxin]. The protein operates within protein modification; protein lipoylation via endogenous pathway; protein N(6)-(lipoyl)lysine from octanoyl-[acyl-carrier-protein]: step 2/2. Catalyzes the radical-mediated insertion of two sulfur atoms into the C-6 and C-8 positions of the octanoyl moiety bound to the lipoyl domains of lipoate-dependent enzymes, thereby converting the octanoylated domains into lipoylated derivatives. In Leptospira interrogans serogroup Icterohaemorrhagiae serovar Lai (strain 56601), this protein is Lipoyl synthase.